The primary structure comprises 904 residues: Pyrimidine pathway regulatory protein 1 (904 aa).

Residues M1–S11 show a composition bias toward basic residues. Residues M1 to I27 form a disordered region. Positions N12–D21 are enriched in basic and acidic residues. Zn(2+) contacts are provided by C34, C37, C44, C51, C54, and C61. The segment at residues C34 to C61 is a DNA-binding region (zn(2)-C6 fungal-type). The tract at residues G883–F904 is disordered.

As to quaternary structure, binds DNA as a homodimer.

The protein resides in the nucleus. Its function is as follows. Positive regulator of URA1 and URA3 expression. The protein is Pyrimidine pathway regulatory protein 1 (PPR1) of Saccharomyces cerevisiae (strain ATCC 204508 / S288c) (Baker's yeast).